Consider the following 259-residue polypeptide: Peptide methionine sulfoxide reductase (259 aa).

The interval 66-90 (TRTPADASMDQSSIAQGPDDDIPAP) is disordered.

It belongs to the MsrA Met sulfoxide reductase family.

The catalysed reaction is L-methionyl-[protein] + [thioredoxin]-disulfide + H2O = L-methionyl-(S)-S-oxide-[protein] + [thioredoxin]-dithiol. It carries out the reaction [thioredoxin]-disulfide + L-methionine + H2O = L-methionine (S)-S-oxide + [thioredoxin]-dithiol. Its function is as follows. Has an important function as a repair enzyme for proteins that have been inactivated by oxidation. Catalyzes the reversible oxidation-reduction of methionine sulfoxide in proteins to methionine. The polypeptide is Peptide methionine sulfoxide reductase (Lactuca sativa (Garden lettuce)).